We begin with the raw amino-acid sequence, 88 residues long: Exodeoxyribonuclease 7 small subunit (88 aa).

The disordered stretch occupies residues 69–88 (ALAEEADPEDGASGADGGGA).

It belongs to the XseB family. Heterooligomer composed of large and small subunits.

Its subcellular location is the cytoplasm. It carries out the reaction Exonucleolytic cleavage in either 5'- to 3'- or 3'- to 5'-direction to yield nucleoside 5'-phosphates.. In terms of biological role, bidirectionally degrades single-stranded DNA into large acid-insoluble oligonucleotides, which are then degraded further into small acid-soluble oligonucleotides. This chain is Exodeoxyribonuclease 7 small subunit, found in Streptomyces coelicolor (strain ATCC BAA-471 / A3(2) / M145).